We begin with the raw amino-acid sequence, 216 residues long: Large ribosomal subunit protein uL3 (216 aa).

Residues R134–Q153 are disordered. The residue at position 153 (Q153) is an N5-methylglutamine.

Belongs to the universal ribosomal protein uL3 family. As to quaternary structure, part of the 50S ribosomal subunit. Forms a cluster with proteins L14 and L19. In terms of processing, methylated by PrmB.

Its function is as follows. One of the primary rRNA binding proteins, it binds directly near the 3'-end of the 23S rRNA, where it nucleates assembly of the 50S subunit. This Cupriavidus taiwanensis (strain DSM 17343 / BCRC 17206 / CCUG 44338 / CIP 107171 / LMG 19424 / R1) (Ralstonia taiwanensis (strain LMG 19424)) protein is Large ribosomal subunit protein uL3.